Reading from the N-terminus, the 998-residue chain is Ephrin type-B receptor 3 (998 aa).

An N-terminal signal peptide occupies residues 1–33; it reads MARARPPPPPSPPPGLLPLLPPLLLLPLLLLPA. Topologically, residues 34 to 559 are extracellular; sequence GCRALEETLM…AQQLQEQLPL (526 aa). The Eph LBD domain occupies 39 to 217; it reads EETLMDTKWV…FYKKCASTTA (179 aa). Cys81 and Cys199 form a disulfide bridge. 2 Fibronectin type-III domains span residues 339–451 and 452–545; these read VPSP…TNQA and APSE…TTSE. Residues Asn351 and Asn445 are each glycosylated (N-linked (GlcNAc...) asparagine). A helical membrane pass occupies residues 560–580; sequence IVGSATAGLVFVVAVVVIAIV. The Cytoplasmic portion of the chain corresponds to 581-998; that stretch reads CLRKQRHGSD…QMNQTLPVQV (418 aa). Phosphotyrosine; by autocatalysis is present on Tyr614. The 264-residue stretch at 633–896 folds into the Protein kinase domain; sequence VKIEEVIGAG…QIVNTLDKLI (264 aa). ATP-binding positions include 639–647 and Lys665; that span reads IGAGEFGEV. Asp758 (proton acceptor) is an active-site residue. In terms of domain architecture, SAM spans 925–989; sequence TTFTTVGDWL…LSSIQDMRLQ (65 aa). The PDZ-binding motif lies at 996-998; sequence VQV.

It belongs to the protein kinase superfamily. Tyr protein kinase family. Ephrin receptor subfamily. Heterotetramer upon binding of the ligand. The heterotetramer is composed of an ephrin dimer and a receptor dimer. Oligomerization is probably required to induce biological responses. Post-translationally, phosphorylated. Autophosphorylates upon ligand-binding. Autophosphorylation on Tyr-614 is required for interaction with SH2 domain-containing proteins. Ubiquitinated by RNF186, mainly through 'Lys-48' and 'Lys-63'-linked polyubiquitin chains. In terms of tissue distribution, ubiquitous.

Its subcellular location is the cell membrane. It localises to the cell projection. The protein localises to the dendrite. It catalyses the reaction L-tyrosyl-[protein] + ATP = O-phospho-L-tyrosyl-[protein] + ADP + H(+). Receptor tyrosine kinase which binds promiscuously transmembrane ephrin-B family ligands residing on adjacent cells, leading to contact-dependent bidirectional signaling into neighboring cells. The signaling pathway downstream of the receptor is referred to as forward signaling while the signaling pathway downstream of the ephrin ligand is referred to as reverse signaling. Generally has an overlapping and redundant function with EPHB2. Like EPHB2, functions in axon guidance during development regulating for instance the neurons forming the corpus callosum and the anterior commissure, 2 major interhemispheric connections between the temporal lobes of the cerebral cortex. In addition to its role in axon guidance also plays an important redundant role with other ephrin-B receptors in development and maturation of dendritic spines and the formation of excitatory synapses. Controls other aspects of development through regulation of cell migration and positioning. This includes angiogenesis, palate development and thymic epithelium development for instance. Forward and reverse signaling through the EFNB2/EPHB3 complex also regulate migration and adhesion of cells that tubularize the urethra and septate the cloaca. Finally, plays an important role in intestinal epithelium differentiation segregating progenitor from differentiated cells in the crypt. The sequence is that of Ephrin type-B receptor 3 (EPHB3) from Homo sapiens (Human).